A 96-amino-acid polypeptide reads, in one-letter code: Myticin-B (96 aa).

Positions 1–20 (MKATMLLAVVVAVFVAGTEA) are cleaved as a signal peptide. The propeptide at 61-96 (VKFPFGATQDAKSMNELEYTPIMKSMENLDNGMDML) is removed in mature form.

In terms of processing, contains four disulfide bonds. Hemocytes.

The protein localises to the secreted. Bacteriolytic activity against Gram-positive bacteria M.luteus, B.megaterium and A.viridans and Gram-negative bacteria E.coli D31. Possesses antifungal activity against F.oxysporum. The sequence is that of Myticin-B from Mytilus galloprovincialis (Mediterranean mussel).